Consider the following 657-residue polypeptide: Histidine ammonia-lyase (657 aa).

Residues 253–255 (ASG) constitute a cross-link (5-imidazolinone (Ala-Gly)). Ser254 is subject to 2,3-didehydroalanine (Ser). The residue at position 396 (Thr396) is a Phosphothreonine. Phosphoserine is present on Ser635. Thr637 is modified (phosphothreonine). Ser648 is modified (phosphoserine).

The protein belongs to the PAL/histidase family. Post-translationally, contains an active site 4-methylidene-imidazol-5-one (MIO), which is formed autocatalytically by cyclization and dehydration of residues Ala-Ser-Gly.

The enzyme catalyses L-histidine = trans-urocanate + NH4(+). Its pathway is amino-acid degradation; L-histidine degradation into L-glutamate; N-formimidoyl-L-glutamate from L-histidine: step 1/3. This chain is Histidine ammonia-lyase (HAL), found in Homo sapiens (Human).